A 421-amino-acid chain; its full sequence is Gamma-glutamyl phosphate reductase (421 aa).

It belongs to the gamma-glutamyl phosphate reductase family.

It localises to the cytoplasm. The catalysed reaction is L-glutamate 5-semialdehyde + phosphate + NADP(+) = L-glutamyl 5-phosphate + NADPH + H(+). It functions in the pathway amino-acid biosynthesis; L-proline biosynthesis; L-glutamate 5-semialdehyde from L-glutamate: step 2/2. In terms of biological role, catalyzes the NADPH-dependent reduction of L-glutamate 5-phosphate into L-glutamate 5-semialdehyde and phosphate. The product spontaneously undergoes cyclization to form 1-pyrroline-5-carboxylate. In Roseobacter denitrificans (strain ATCC 33942 / OCh 114) (Erythrobacter sp. (strain OCh 114)), this protein is Gamma-glutamyl phosphate reductase.